A 35-amino-acid chain; its full sequence is Photosystem II reaction center protein Psb30 (35 aa).

A helical transmembrane segment spans residues leucine 7–isoleucine 27.

Belongs to the Psb30/Ycf12 family. PSII is composed of 1 copy each of membrane proteins PsbA, PsbB, PsbC, PsbD, PsbE, PsbF, PsbH, PsbI, PsbJ, PsbK, PsbL, PsbM, PsbT, PsbX, PsbY, PsbZ, Psb30/Ycf12, peripheral proteins of the oxygen-evolving complex and a large number of cofactors. It forms dimeric complexes.

It localises to the plastid. The protein localises to the organellar chromatophore thylakoid membrane. Its function is as follows. A core subunit of photosystem II (PSII), probably helps stabilize the reaction center. The protein is Photosystem II reaction center protein Psb30 of Paulinella chromatophora.